Here is a 934-residue protein sequence, read N- to C-terminus: LPS-assembly protein LptD (934 aa).

The N-terminal stretch at 1–33 (MALKSPAFRRKFPLLVTGGLLALQPFATSYVVA) is a signal peptide. Residues 52–86 (KSPVNNLPPRPVHDGAALTSGTEAPSAEAESADKP) form a disordered region.

The protein belongs to the LptD family. As to quaternary structure, component of the lipopolysaccharide transport and assembly complex. Interacts with LptE and LptA.

Its subcellular location is the cell outer membrane. Its function is as follows. Together with LptE, is involved in the assembly of lipopolysaccharide (LPS) at the surface of the outer membrane. This is LPS-assembly protein LptD from Pseudomonas putida (strain W619).